Reading from the N-terminus, the 543-residue chain is 2,3-bisphosphoglycerate-independent phosphoglycerate mutase (543 aa).

2 residues coordinate Mn(2+): aspartate 24 and serine 74. The Phosphoserine intermediate role is filled by serine 74. Substrate contacts are provided by residues histidine 135, 165-166 (RD), arginine 197, arginine 203, 268-271 (RPDR), and lysine 341. The Mn(2+) site is built by aspartate 408, histidine 412, aspartate 449, histidine 450, and histidine 467.

Belongs to the BPG-independent phosphoglycerate mutase family. As to quaternary structure, monomer. Requires Mn(2+) as cofactor.

It carries out the reaction (2R)-2-phosphoglycerate = (2R)-3-phosphoglycerate. It functions in the pathway carbohydrate degradation; glycolysis; pyruvate from D-glyceraldehyde 3-phosphate: step 3/5. Its function is as follows. Catalyzes the interconversion of 2-phosphoglycerate and 3-phosphoglycerate. This Parasynechococcus marenigrum (strain WH8102) protein is 2,3-bisphosphoglycerate-independent phosphoglycerate mutase.